The sequence spans 246 residues: Pyridoxine 5'-phosphate synthase (246 aa).

Asn12 contacts 3-amino-2-oxopropyl phosphate. 1-deoxy-D-xylulose 5-phosphate is bound at residue 14–15 (DH). A 3-amino-2-oxopropyl phosphate-binding site is contributed by Arg23. The active-site Proton acceptor is His48. 1-deoxy-D-xylulose 5-phosphate-binding residues include Arg50 and His55. The active-site Proton acceptor is Glu75. Thr105 contributes to the 1-deoxy-D-xylulose 5-phosphate binding site. His196 functions as the Proton donor in the catalytic mechanism. Residues Gly197 and 218 to 219 (GH) contribute to the 3-amino-2-oxopropyl phosphate site.

It belongs to the PNP synthase family. As to quaternary structure, homooctamer; tetramer of dimers.

It is found in the cytoplasm. It catalyses the reaction 3-amino-2-oxopropyl phosphate + 1-deoxy-D-xylulose 5-phosphate = pyridoxine 5'-phosphate + phosphate + 2 H2O + H(+). It functions in the pathway cofactor biosynthesis; pyridoxine 5'-phosphate biosynthesis; pyridoxine 5'-phosphate from D-erythrose 4-phosphate: step 5/5. In terms of biological role, catalyzes the complicated ring closure reaction between the two acyclic compounds 1-deoxy-D-xylulose-5-phosphate (DXP) and 3-amino-2-oxopropyl phosphate (1-amino-acetone-3-phosphate or AAP) to form pyridoxine 5'-phosphate (PNP) and inorganic phosphate. The polypeptide is Pyridoxine 5'-phosphate synthase (Thioalkalivibrio sulfidiphilus (strain HL-EbGR7)).